The sequence spans 962 residues: Exportin-T (962 aa).

The residue at position 1 (M1) is an N-acetylmethionine. Residues 1 to 385 (MDEQALLGLN…MLAVMKKLTY (385 aa)) are necessary for interaction with Ran, nuclear localization and nuclear import. The tract at residues 443–962 (FMEVEVAIRL…LKVFFQRAKP (520 aa)) is necessary for tRNA-binding, cytoplasmic localization and nuclear export. N6-acetyllysine is present on K634.

This sequence belongs to the exportin family. As to quaternary structure, found in a complex with XPOT, Ran and tRNA. Probably found in a complex with nucleoporins. Interacts with Ran and tRNA in a GTP-dependent manner.

It is found in the nucleus. Its subcellular location is the cytoplasm. Mediates the nuclear export of aminoacylated tRNAs. In the nucleus binds to tRNA and to the GTPase Ran in its active GTP-bound form. Docking of this trimeric complex to the nuclear pore complex (NPC) is mediated through binding to nucleoporins. Upon transit of a nuclear export complex into the cytoplasm, disassembling of the complex and hydrolysis of Ran-GTP to Ran-GDP (induced by RANBP1 and RANGAP1, respectively) cause release of the tRNA from the export receptor. XPOT then return to the nuclear compartment and mediate another round of transport. The directionality of nuclear export is thought to be conferred by an asymmetric distribution of the GTP- and GDP-bound forms of Ran between the cytoplasm and nucleus. This is Exportin-T (XPOT) from Homo sapiens (Human).